The following is a 240-amino-acid chain: Octanoyltransferase (240 aa).

One can recognise a BPL/LPL catalytic domain in the interval 49 to 233 (GEAPELVWLL…AFESVFGATR (185 aa)). Residues 87-94 (RGGQVTYH), 162-164 (AIG), and 175-177 (GIA) contribute to the substrate site. Catalysis depends on Cys-193, which acts as the Acyl-thioester intermediate.

Belongs to the LipB family.

Its subcellular location is the cytoplasm. It carries out the reaction octanoyl-[ACP] + L-lysyl-[protein] = N(6)-octanoyl-L-lysyl-[protein] + holo-[ACP] + H(+). It functions in the pathway protein modification; protein lipoylation via endogenous pathway; protein N(6)-(lipoyl)lysine from octanoyl-[acyl-carrier-protein]: step 1/2. In terms of biological role, catalyzes the transfer of endogenously produced octanoic acid from octanoyl-acyl-carrier-protein onto the lipoyl domains of lipoate-dependent enzymes. Lipoyl-ACP can also act as a substrate although octanoyl-ACP is likely to be the physiological substrate. In Bradyrhizobium sp. (strain BTAi1 / ATCC BAA-1182), this protein is Octanoyltransferase.